We begin with the raw amino-acid sequence, 353 residues long: Photosystem II protein D1 (353 aa).

Thr-2 is modified (N-acetylthreonine). Thr-2 carries the post-translational modification Phosphothreonine. 3 helical membrane passes run 29 to 46 (YIGW…TATS), 118 to 133 (HFLL…EWEL), and 142 to 156 (WIAV…AATA). Chlorophyll a is bound at residue His-118. Residue Tyr-126 coordinates pheophytin a. Residues Asp-170 and Glu-189 each coordinate [CaMn4O5] cluster. A helical membrane pass occupies residues 197–218 (FHMLGVAGVFGGSLFSAMHGSL). Residue His-198 coordinates chlorophyll a. A quinone contacts are provided by residues His-215 and 264–265 (SF). His-215 is a Fe cation binding site. His-272 contributes to the Fe cation binding site. Residues 274-288 (FLAAWPVVGIWFTAL) traverse the membrane as a helical segment. [CaMn4O5] cluster-binding residues include His-332, Glu-333, Asp-342, and Ala-344. Residues 345–353 (AVEANSIDG) constitute a propeptide that is removed on maturation.

Belongs to the reaction center PufL/M/PsbA/D family. In terms of assembly, PSII is composed of 1 copy each of membrane proteins PsbA, PsbB, PsbC, PsbD, PsbE, PsbF, PsbH, PsbI, PsbJ, PsbK, PsbL, PsbM, PsbT, PsbX, PsbY, PsbZ, Psb30/Ycf12, at least 3 peripheral proteins of the oxygen-evolving complex and a large number of cofactors. It forms dimeric complexes. Requires The D1/D2 heterodimer binds P680, chlorophylls that are the primary electron donor of PSII, and subsequent electron acceptors. It shares a non-heme iron and each subunit binds pheophytin, quinone, additional chlorophylls, carotenoids and lipids. D1 provides most of the ligands for the Mn4-Ca-O5 cluster of the oxygen-evolving complex (OEC). There is also a Cl(-1) ion associated with D1 and D2, which is required for oxygen evolution. The PSII complex binds additional chlorophylls, carotenoids and specific lipids. as cofactor. Tyr-161 forms a radical intermediate that is referred to as redox-active TyrZ, YZ or Y-Z. In terms of processing, C-terminally processed by CTPA; processing is essential to allow assembly of the oxygen-evolving complex and thus photosynthetic growth.

It is found in the plastid. The protein localises to the chloroplast thylakoid membrane. The enzyme catalyses 2 a plastoquinone + 4 hnu + 2 H2O = 2 a plastoquinol + O2. In terms of biological role, photosystem II (PSII) is a light-driven water:plastoquinone oxidoreductase that uses light energy to abstract electrons from H(2)O, generating O(2) and a proton gradient subsequently used for ATP formation. It consists of a core antenna complex that captures photons, and an electron transfer chain that converts photonic excitation into a charge separation. The D1/D2 (PsbA/PsbD) reaction center heterodimer binds P680, the primary electron donor of PSII as well as several subsequent electron acceptors. In Cryptomeria japonica (Japanese cedar), this protein is Photosystem II protein D1.